Reading from the N-terminus, the 225-residue chain is UPF0173 metal-dependent hydrolase Pisl_0803 (225 aa).

This sequence belongs to the UPF0173 family.

The sequence is that of UPF0173 metal-dependent hydrolase Pisl_0803 from Pyrobaculum islandicum (strain DSM 4184 / JCM 9189 / GEO3).